The chain runs to 355 residues: Protein RecA (355 aa).

72–79 contacts ATP; sequence GPESSGKT.

The protein belongs to the RecA family.

The protein localises to the cytoplasm. Can catalyze the hydrolysis of ATP in the presence of single-stranded DNA, the ATP-dependent uptake of single-stranded DNA by duplex DNA, and the ATP-dependent hybridization of homologous single-stranded DNAs. It interacts with LexA causing its activation and leading to its autocatalytic cleavage. The chain is Protein RecA from Wolbachia sp. subsp. Drosophila simulans (strain wRi).